The sequence spans 154 residues: Endoribonuclease YbeY (154 aa).

Positions 113, 117, and 123 each coordinate Zn(2+).

This sequence belongs to the endoribonuclease YbeY family. Requires Zn(2+) as cofactor.

Its subcellular location is the cytoplasm. Its function is as follows. Single strand-specific metallo-endoribonuclease involved in late-stage 70S ribosome quality control and in maturation of the 3' terminus of the 16S rRNA. The protein is Endoribonuclease YbeY of Vibrio campbellii (strain ATCC BAA-1116).